Reading from the N-terminus, the 258-residue chain is Uroplakin-1a (258 aa).

The Cytoplasmic segment spans residues M1–P14. The helical transmembrane segment at V15–F35 threads the bilayer. Topologically, residues A36–D59 are extracellular. Residues V60–L86 form a helical membrane-spanning segment. The Cytoplasmic segment spans residues C87 to S91. A helical membrane pass occupies residues M92 to I112. Topologically, residues T113–T230 are extracellular. N170 carries N-linked (GlcNAc...) asparagine glycosylation. The helical transmembrane segment at W231–M252 threads the bilayer. Topologically, residues Y253–L258 are cytoplasmic.

The protein belongs to the tetraspanin (TM4SF) family. Homodimer; disulfide-linked. Interacts with uroplakin-2 (UPK2). The N-terminus is blocked. Post-translationally, N-glycosylated with high-mannose oligosaccharides. As to expression, bladder epithelium.

It is found in the membrane. Its function is as follows. Component of the asymmetric unit membrane (AUM); a highly specialized biomembrane elaborated by terminally differentiated urothelial cells. May play an important role in normal bladder epithelial physiology, possibly in regulating membrane permeability of superficial umbrella cells or in stabilizing the apical membrane through AUM/cytoskeletal interactions. This Bos taurus (Bovine) protein is Uroplakin-1a (UPK1A).